Reading from the N-terminus, the 1335-residue chain is Regulatory-associated protein of mTOR (1335 aa).

A phosphoserine mark is found at S44 and S122. The residue at position 696 (S696) is a Phosphoserine; by MAPK8. An O-linked (GlcNAc) threonine glycan is attached at T700. T706 carries the phosphothreonine; by MAPK8 modification. 2 positions are modified to phosphoserine; by RPS6KA1: S719 and S721. Phosphoserine; by AMPK and RPS6KA1 is present on S722. S738 is modified (phosphoserine). Residues 749 to 771 are disordered; that stretch reads GSSVAFSPGNLSTSSSASSTLGS. The span at 755 to 771 shows a compositional bias: low complexity; sequence SPGNLSTSSSASSTLGS. S791 carries the post-translational modification Phosphoserine. A Phosphoserine; by AMPK modification is found at S792. 2 positions are modified to phosphoserine: S836 and S855. The segment covering 853–866 has biased composition (polar residues); that stretch reads TSSLTQSAPASPTN. Residues 853–942 form a disordered region; it reads TSSLTQSAPA…GPDQTTDDAD (90 aa). S859 carries the phosphoserine; by MTOR modification. Residue S863 is modified to Phosphoserine; by MAPK8, MTOR and NLK. Phosphothreonine is present on T865. Position 877 is a phosphoserine (S877). The segment covering 877-887 has biased composition (low complexity); it reads SPPASSTSSCS. Over residues 888–898 the composition is skewed to polar residues; that stretch reads LTNDVAKQTVS. Glycyl lysine isopeptide (Lys-Gly) (interchain with G-Cter in ubiquitin) cross-links involve residues K932 and K948. S982 bears the Phosphoserine mark. WD repeat units lie at residues 1020 to 1061, 1065 to 1106, 1121 to 1160, 1164 to 1203, 1209 to 1249, 1251 to 1291, and 1299 to 1335; these read NRNP…DYFH, PRYT…EKNP, TTRG…KVQD, GADS…SECR, EHTA…SVNV, QIVK…NNIK, and QRVG…KRVR. N6-acetyllysine is present on K1097.

The protein belongs to the WD repeat RAPTOR family. Part of the mechanistic target of rapamycin complex 1 (mTORC1) which contains MTOR, MLST8 and RPTOR. mTORC1 associates with AKT1S1/PRAS40, which inhibits its activity. mTORC1 associates with DEPTOR, which regulates its activity. mTORC1 binds to and is inhibited by FKBP12-rapamycin. Forms a complex with MTOR under both leucine-rich and -poor conditions. Interacts with (via TOS motifs) EIF4EBP1 and RPS6KB1; interaction is independent of its association with MTOR. Binds preferentially to poorly or non-phosphorylated forms of EIF4EBP1, and this binding is critical to the ability of MTOR to catalyze phosphorylation. Interacts with ULK1 in a nutrient-dependent manner; the interaction is reduced during starvation. Interacts with GTP-bound form of RagA/RRAGA or RagB/RRAGB and GDP-bound form of RagC/RRAGC or RagD/RRAGD, promoting recruitment of mTORC1 to the lysosomes. Interacts (when phosphorylated by AMPK) with 14-3-3 protein, leading to inhibition of its activity. Interacts with SPAG5; SPAG5 competes with MTOR for RPTOR-binding, resulting in decreased mTORC1 formation. Interacts with WAC; WAC positively regulates MTOR activity by promoting the assembly of the TTT complex composed of TELO2, TTI1 and TTI2 and the RUVBL complex composed of RUVBL1 and RUVBL2 into the TTT-RUVBL complex which leads to the dimerization of the mTORC1 complex and its subsequent activation. Interacts with G3BP1. The complex formed with G3BP1 and SPAG5 is increased by oxidative stress. Interacts with HTR6. Interacts with PIH1D1. Interacts with LARP1. Interacts with BRAT1. Interacts with SIK3. Interacts with SLC38A7; this interaction mediates the recruitment of mTORC1 to the lysosome and its subsequent activation. Insulin-stimulated phosphorylation at Ser-863 by MTOR and MAPK8 regulates mTORC1 activity. Phosphorylated at Ser-863 by NLK in response to stress, disrupting the interaction with small GTPases Rag (RagA/RRAGA, RagB/RRAGB, RagC/RRAGC and/or RagD/RRAGD), thereby preventing lysosome recruitment and activation of the mTORC1 complex. Osmotic stress also induces phosphorylation at Ser-696, Thr-706 and Ser-863 by MAPK8. Ser-863 phosphorylation is required for phosphorylation at Ser-855 and Ser-859. In response to nutrient limitation, phosphorylated at Ser-722 and Ser-792 by AMPK; phosphorylation promotes interaction with 14-3-3 proteins, leading to negative regulation of the mTORC1 complex. Phosphorylation at Ser-722 and Ser-792 by AMPK in response to glucose starvation inhibits O-GlcNAcylation by OGT and subsequent activation of mTORC1. In response to growth factors, phosphorylated at Ser-719, Ser-721 and Ser-722 by RPS6KA1, which stimulates mTORC1 activity. Phosphorylation at Ser-791 by PKA downstream of cAMP inhibits the mTORC1 complex. Phosphorylated at Ser-877 by TBK1, leading to negative regulation of the mTORC1 complex. Post-translationally, O-GlcNAcylated by OGT upon glucose sufficiency, promoting interaction with small GTPases Rag (RagA/RRAGA, RagB/RRAGB, RagC/RRAGC and/or RagD/RRAGD) and subsequent recruitment of mTORC1 to lysosomal membranes, leading to activation of the mTORC1 complex. Phosphorylation at Ser-722 and Ser-792 by AMPK in response to glucose starvation inhibits O-GlcNAcylation. In terms of processing, acetylation at Lys-1097 by EP300/p300 in response to leucine metabolite acetyl-coA promotes its activity, leading to activation of the mTORC1 complex. Acetylation is decreased in response to fasting. Phosphorylated at Ser-877 by TBK1, leading to negative regulation of the mTORC1 complex. Ubiquitinated, leading to its degradation by the proteasome. Deubiquitinated by OTUB1 via a non-catalytic mechanism. Ubiquitinated by an E3 ubiquitin ligase complex containing VHL.

It is found in the cytoplasm. It localises to the lysosome. The protein resides in the cytoplasmic granule. Its function is as follows. Component of the mechanistic target of rapamycin complex 1 (mTORC1), an evolutionarily conserved central nutrient sensor that stimulates anabolic reactions and macromolecule biosynthesis to promote cellular biomass generation and growth. In response to nutrients, growth factors or amino acids, mTORC1 is recruited to the lysosome membrane and promotes protein, lipid and nucleotide synthesis by phosphorylating several substrates, such as ribosomal protein S6 kinase (RPS6KB1 and RPS6KB2) and EIF4EBP1 (4E-BP1). In the same time, it inhibits catabolic pathways by phosphorylating the autophagy initiation components ULK1 and ATG13, as well as transcription factor TFEB, a master regulators of lysosomal biogenesis and autophagy. The mTORC1 complex is inhibited in response to starvation and amino acid depletion. Within the mTORC1 complex, RPTOR acts both as a molecular adapter, which (1) mediates recruitment of mTORC1 to lysosomal membranes via interaction with small GTPases Rag (RagA/RRAGA, RagB/RRAGB, RagC/RRAGC and/or RagD/RRAGD), and a (2) substrate-specific adapter, which promotes substrate specificity by binding to TOS motif-containing proteins and direct them towards the active site of the MTOR kinase domain for phosphorylation. mTORC1 complex regulates many cellular processes, such as odontoblast and osteoclast differentiation or neuronal transmission. mTORC1 complex in excitatory neuronal transmission is required for the prosocial behavior induced by the psychoactive substance lysergic acid diethylamide (LSD). The chain is Regulatory-associated protein of mTOR from Mus musculus (Mouse).